The following is a 402-amino-acid chain: NADH-quinone oxidoreductase subunit D 2 (402 aa).

It belongs to the complex I 49 kDa subunit family. In terms of assembly, NDH-1 is composed of 14 different subunits. Subunits NuoB, C, D, E, F, and G constitute the peripheral sector of the complex.

It is found in the cell inner membrane. It catalyses the reaction a quinone + NADH + 5 H(+)(in) = a quinol + NAD(+) + 4 H(+)(out). Its function is as follows. NDH-1 shuttles electrons from NADH, via FMN and iron-sulfur (Fe-S) centers, to quinones in the respiratory chain. The immediate electron acceptor for the enzyme in this species is believed to be ubiquinone. Couples the redox reaction to proton translocation (for every two electrons transferred, four hydrogen ions are translocated across the cytoplasmic membrane), and thus conserves the redox energy in a proton gradient. This Nitrobacter hamburgensis (strain DSM 10229 / NCIMB 13809 / X14) protein is NADH-quinone oxidoreductase subunit D 2.